The primary structure comprises 272 residues: uncharacterized protein (272 aa).

Residues 101-130 (CPTGKKNKAPSSLIPKISKTSTSSLTKEDE) are disordered. Residues 110 to 125 (PSSLIPKISKTSTSSL) show a composition bias toward low complexity. A Phosphoserine modification is found at Ser-142.

This is an uncharacterized protein from Arabidopsis thaliana (Mouse-ear cress).